We begin with the raw amino-acid sequence, 562 residues long: MASSETRMNKAREKEEAIANGVKLRALQASLMQMKSSPSSNYSLRNPSSSSAASPASRPLPNLSAHDYPVFTPSYEDEPVSAFHHKNLTLSETWDEDGVGLVDGDTYLSDSYKTSTSRKTVMMPHQDSHHHVYTMSDALRSPPLHFYTTGRSNCGSVDFRSVSSCNDYNKQKGFDTKSLKSSNLVVPLTDSHSAVVSSQPRNRGGRVMSWLFPKLKKKQKSNSIFNSPSITEKSEEVSEVLKDSGSGVEKLKRELMEANRSRDAALTQVSEMKSSLGELSEKLQYLESYCDNLKKALREATEVVSQENSGGRSSGKKNSEMPVSEEVMVEGFLQIVSEARLSIKQFLKTLVSEIDEEDSTLIGNINTLLQPHNLSFTSKYSKIIQYHLEAIISQSVYQDFENCVFQKNGKPKLLDPEQDRQANFSSFASLRNLSWNEVLKKGTKYYSDEFSRFCDEKMSLIITTLNWTRPWSEQMLQAFFVAAKCVWLLHLLAFSFNPALGILRVEENREFESSFMEDMGADRQRSALSRGPARVKVMVMPGFYVLDRVLRCKVLCRYKSLG.

Disordered stretches follow at residues 29–61 and 303–322; these read ASLMQMKSSPSSNYSLRNPSSSSAASPASRPLP and VVSQENSGGRSSGKKNSEMP. Residues 36–61 are compositionally biased toward low complexity; the sequence is SSPSSNYSLRNPSSSSAASPASRPLP. Positions 246–306 form a coiled coil; it reads SGVEKLKREL…LREATEVVSQ (61 aa).

In terms of assembly, interacts with IRK. In terms of tissue distribution, highly expressed in root tips, shoot apices and developing flowers.

The sequence is that of IRK-interacting protein from Arabidopsis thaliana (Mouse-ear cress).